The following is a 627-amino-acid chain: Muscarinic acetylcholine receptor gar-2 (627 aa).

The Extracellular portion of the chain corresponds to 1–9; sequence MAVASVLLA. Residues 10 to 30 traverse the membrane as a helical segment; it reads LFMLFLSIVTVIGNLAVLLSY. Residues 31-41 lie on the Cytoplasmic side of the membrane; sequence YLDKNIRQPTN. Residues 42–62 form a helical membrane-spanning segment; that stretch reads YFIFSLAISDLLIGLEGIPVY. The Extracellular portion of the chain corresponds to 63–81; it reads TAFYLNNNEWIWGDVLCDL. Cysteines 79 and 160 form a disulfide. The chain crosses the membrane as a helical span at residues 82 to 102; the sequence is WLSIDYIVCLASIYTVLGITV. At 103 to 122 the chain is on the cytoplasmic side; that stretch reads DRYYSVKKPATYRNWRTPGR. Residues 123–143 traverse the membrane as a helical segment; sequence VVLIIIFIWLVPSILFSVSIF. Residues 144 to 172 are Extracellular-facing; that stretch reads GYGTFTGTGRILKETECYVQFMTNPYLNM. The helical transmembrane segment at 173 to 193 threads the bilayer; that stretch reads GMYISYYWTTLFVMLYLYWGI. At 194-549 the chain is on the cytoplasmic side; that stretch reads YRAAKKLALK…ENRARKALRT (356 aa). Disordered stretches follow at residues 222 to 266, 423 to 442, and 449 to 475; these read VSVR…VGTP, REDE…ENGG, and ANDE…HDPN. Positions 231–264 are enriched in low complexity; sequence NSSSDSPNDTSNSSKCFRTAPPTTTVQTTQTNVG. Over residues 459 to 475 the composition is skewed to basic and acidic residues; sequence KESEQKEEMTPENHDPN. Residues 550–570 traverse the membrane as a helical segment; the sequence is ITFILGSFIILWTPFYVLATI. Residues 571–586 are Extracellular-facing; sequence YGFCETCKASPSFNTL. The helical transmembrane segment at 587–609 threads the bilayer; sequence YTISYYLCYMNSPLNPFCYAMAN. Topologically, residues 610–627 are cytoplasmic; sequence QQFKKTLTRIFKGDFRRV.

The protein belongs to the G-protein coupled receptor 1 family. Muscarinic acetylcholine receptor subfamily. As to expression, expressed in putative sensory neurons, many cells of the ventral cord and in the HSN motor neurons. Expressed in some cholinergic motor neurons and GABAergic motor neurons, which are the two major types of ventral cord motor neurons.

The protein resides in the cell membrane. Its subcellular location is the cell projection. It localises to the axon. In terms of biological role, the muscarinic acetylcholine receptor mediates various cellular responses, including inhibition of adenylate cyclase, breakdown of phosphoinositides and modulation of potassium channels through the action of G proteins. Primary transducing effect is Pi turnover. Regulates the activity of ventral cord motor neurons. Couples to the G(o)-alpha G-protein subunit goa-1 to negatively regulate cholinergic receptor activity in the presence of high levels of the neurotransmitter acetylcholine in ventral cord motor neurons. As acetylcholine depolarizes body wall muscles, modulation of acetylcholine levels most likely results in the control locomotory behavior and egg-laying. The polypeptide is Muscarinic acetylcholine receptor gar-2 (Caenorhabditis elegans).